The following is a 147-amino-acid chain: Ponticulin-like protein C1 (147 aa).

An N-terminal signal peptide occupies residues 1-20; the sequence is MKFTKSLLLLIVAVFASSNA. A lipid anchor (GPI-like-anchor amidated asparagine) is attached at N118. N-linked (GlcNAc...) asparagine glycosylation occurs at N118. A propeptide spans 119-147 (removed in mature form); sequence SSESDSSDSTRIGASFALAASVLLSMLAI.

This sequence belongs to the ponticulin family. Post-translationally, the GPI-like-anchor contains a phosphoceramide group, rather than a phosphatidyl group.

Its subcellular location is the cell membrane. The polypeptide is Ponticulin-like protein C1 (ponC1) (Dictyostelium discoideum (Social amoeba)).